Reading from the N-terminus, the 60-residue chain is Large ribosomal subunit protein bL32A (60 aa).

Residues 1-19 (MAVPKRRMSRSNTRSRRSQ) show a composition bias toward basic residues. The tract at residues 1 to 21 (MAVPKRRMSRSNTRSRRSQWK) is disordered.

This sequence belongs to the bacterial ribosomal protein bL32 family.

The protein is Large ribosomal subunit protein bL32A of Nocardia farcinica (strain IFM 10152).